We begin with the raw amino-acid sequence, 387 residues long: Succinate--CoA ligase [ADP-forming] subunit beta (387 aa).

ATP-binding positions include Lys46, 53 to 55 (GRG), Glu99, Ala102, and Glu107. Mg(2+) contacts are provided by Asn199 and Asp213. Substrate contacts are provided by residues Asn264 and 321–323 (GIV).

This sequence belongs to the succinate/malate CoA ligase beta subunit family. In terms of assembly, heterotetramer of two alpha and two beta subunits. Requires Mg(2+) as cofactor.

It catalyses the reaction succinate + ATP + CoA = succinyl-CoA + ADP + phosphate. The catalysed reaction is GTP + succinate + CoA = succinyl-CoA + GDP + phosphate. The protein operates within carbohydrate metabolism; tricarboxylic acid cycle; succinate from succinyl-CoA (ligase route): step 1/1. Its function is as follows. Succinyl-CoA synthetase functions in the citric acid cycle (TCA), coupling the hydrolysis of succinyl-CoA to the synthesis of either ATP or GTP and thus represents the only step of substrate-level phosphorylation in the TCA. The beta subunit provides nucleotide specificity of the enzyme and binds the substrate succinate, while the binding sites for coenzyme A and phosphate are found in the alpha subunit. The polypeptide is Succinate--CoA ligase [ADP-forming] subunit beta (Campylobacter jejuni subsp. jejuni serotype O:23/36 (strain 81-176)).